An 889-amino-acid chain; its full sequence is Phosphatidylinositol 3-kinase VPS34 (889 aa).

Positions alanine 34–lysine 184 constitute a C2 PI3K-type domain. The PIK helical domain occupies serine 298–asparagine 540. Residues methionine 607–leucine 873 form the PI3K/PI4K catalytic domain. A G-loop region spans residues valine 613–serine 619. The segment at glycine 742–asparagine 750 is catalytic loop. Residues histidine 761 to proline 782 form an activation loop region.

It belongs to the PI3/PI4-kinase family. Type III PI4K subfamily. Component of the autophagy-specific VPS34 PI3-kinase complex I composed of VPS15, VPS30, VPS34, ATG14 and ATG38; and of the VPS34 PI3-kinase complex II composed of VPS15, VPS30, VPS34 and VPS38. Post-translationally, autophosphorylated.

The protein resides in the golgi apparatus. The protein localises to the trans-Golgi network membrane. It localises to the endosome membrane. The enzyme catalyses a 1,2-diacyl-sn-glycero-3-phospho-(1D-myo-inositol) + ATP = a 1,2-diacyl-sn-glycero-3-phospho-(1D-myo-inositol-3-phosphate) + ADP + H(+). Its function is as follows. Multifunctional phosphatidylinositol 3-kinase that plays a role in signaling in modulation of host immune response, intracellular survival and virulence. Catalytic subunit of the autophagy-specific VPS34 PI3-kinase complex I essential to recruit the ATG8-phosphatidylinositol conjugate and the ATG12-ATG5 conjugate to the pre-autophagosomal structure. Also involved in endosome-to-Golgi retrograde transport as part of the VPS34 PI3-kinase complex II. This second complex is required for the endosome-to-Golgi retrieval of PEP1 and KEX2, and the recruitment of VPS5 and VPS7, two components of the retromer complex, to endosomal membranes (probably through the synthesis of a specific pool of phosphatidylinositol 3-phosphate recruiting the retromer to the endosomes). Finally, it might also be involved in ethanol tolerance and cell wall integrity. The protein is Phosphatidylinositol 3-kinase VPS34 of Candida glabrata (strain ATCC 2001 / BCRC 20586 / JCM 3761 / NBRC 0622 / NRRL Y-65 / CBS 138) (Yeast).